Here is a 507-residue protein sequence, read N- to C-terminus: Protein O-glucosyltransferase 3 (507 aa).

An N-terminal signal peptide occupies residues 1 to 20; sequence MRRLPRALLLQLRLALLVAA. The stretch at 24 to 134 is one Filamin repeat; it reads EVLVSAPRSL…VAQSPYILKG (111 aa). Asn-61 and Asn-306 each carry an N-linked (GlcNAc...) asparagine glycan. The short motif at 504 to 507 is the Prevents secretion from ER element; the sequence is REEL.

Belongs to the KDELC family.

It is found in the endoplasmic reticulum lumen. It catalyses the reaction L-seryl-[EGF-like domain protein] + UDP-alpha-D-glucose = 3-O-(beta-D-glucosyl)-L-seryl-[EGF-like domain protein] + UDP + H(+). The enzyme catalyses L-seryl-[EGF-like domain protein] + UDP-alpha-D-xylose = 3-O-(beta-D-xylosyl)-L-seryl-[EGF-like domain protein] + UDP + H(+). It participates in protein modification; protein glycosylation. Its function is as follows. Protein glucosyltransferase that catalyzes the transfer of glucose from UDP-glucose to a serine residue within the consensus sequence peptide C-X-N-T-X-G-S-F-X-C. Can also catalyze the transfer of xylose from UDP-xylose but less efficiently. Specifically targets extracellular EGF repeats of proteins such as NOTCH1, NOTCH3, FBN1, FBN2 and LTBP1. May regulate the transport of NOTCH1 and NOTCH3 to the plasma membrane and thereby the Notch signaling pathway. The polypeptide is Protein O-glucosyltransferase 3 (Homo sapiens (Human)).